A 335-amino-acid polypeptide reads, in one-letter code: Galactosylgalactosylxylosylprotein 3-beta-glucuronosyltransferase 3 (335 aa).

The Cytoplasmic segment spans residues 1–7; the sequence is MKLKLKN. Residues 8–28 traverse the membrane as a helical; Signal-anchor for type II membrane protein segment; it reads VFLAYFLVSIAGLLYALVQLG. Topologically, residues 29-335 are lumenal; that stretch reads QPCDCLPPLR…GQGSDPAIEV (307 aa). Asp196 contacts Mn(2+). Catalysis depends on Glu281, which acts as the Proton acceptor. Residue Asn300 is glycosylated (N-linked (GlcNAc...) asparagine). Residues 312 to 322 show a composition bias toward basic and acidic residues; the sequence is EKPKMKQEEQL. A disordered region spans residues 312–335; sequence EKPKMKQEEQLQRQGQGSDPAIEV.

Belongs to the glycosyltransferase 43 family. Homodimer; disulfide-linked. Interacts with PXYLP1; the interaction increases the 2-phosphoxylose phosphatase activity of PXYLP1 during completion of linkage region formation in a B3GAT3-mediated manner. Requires Mn(2+) as cofactor. In terms of processing, N-glycosylated. Liver, brain and heart. Moderate expression seen in lung, skeletal muscle, kidney and testis.

The protein resides in the golgi apparatus membrane. It is found in the golgi apparatus. Its subcellular location is the cis-Golgi network. It carries out the reaction 3-O-(beta-D-galactosyl-(1-&gt;3)-beta-D-galactosyl-(1-&gt;4)-beta-D-xylosyl)-L-seryl-[protein] + UDP-alpha-D-glucuronate = 3-O-(beta-D-GlcA-(1-&gt;3)-beta-D-Gal-(1-&gt;3)-beta-D-Gal-(1-&gt;4)-beta-D-Xyl)-L-seryl-[protein] + UDP + H(+). The protein operates within protein modification; protein glycosylation. Its function is as follows. Glycosaminoglycans biosynthesis. Involved in forming the linkage tetrasaccharide present in heparan sulfate and chondroitin sulfate. Transfers a glucuronic acid moiety from the uridine diphosphate-glucuronic acid (UDP-GlcUA) to the common linkage region trisaccharide Gal-beta-1,3-Gal-beta-1,4-Xyl covalently bound to a Ser residue at the glycosaminylglycan attachment site of proteoglycans. Can also play a role in the biosynthesis of l2/HNK-1 carbohydrate epitope on glycoproteins. Highest activity seen with Gal-beta-1,3-Gal-beta-O-R (where R=naphthalenemethanol or benzyl alcohol). Stimulates 2-phosphoxylose phosphatase activity of PXYLP1 in presence of uridine diphosphate-glucuronic acid (UDP-GlcUA) during completion of linkage region formation. The sequence is that of Galactosylgalactosylxylosylprotein 3-beta-glucuronosyltransferase 3 (B3GAT3) from Cricetulus griseus (Chinese hamster).